A 112-amino-acid chain; its full sequence is Photosystem II reaction center Psb28 protein (112 aa).

The protein belongs to the Psb28 family. In terms of assembly, part of the photosystem II complex.

The protein localises to the cellular thylakoid membrane. The polypeptide is Photosystem II reaction center Psb28 protein (Synechocystis sp. (strain ATCC 27184 / PCC 6803 / Kazusa)).